A 358-amino-acid chain; its full sequence is Very long chain fatty acid elongase AAEL008004 (358 aa).

Transmembrane regions (helical) follow at residues 26–46 (WPLMSSPFPTLALCLGYVYLV), 66–86 (LILYNFVQVVFSAWLFYEIGI), 115–135 (ACWWYYFSKFTEFFDTFFFVM), 147–167 (VIHHGCMPMSVWFGVKFTPGG), 171–191 (FFGLLNTFVHIVMYTYYLFTA), 207–227 (TSLQMVQFVAIMVHAFQLLFI), and 234–254 (AFVWWIGMHAVMFLFLFNEFY). Residues 285-295 (SAVSSNGSAIT) show a composition bias toward polar residues. Positions 285-322 (SAVSSNGSAITANGHHGKNGSVHHHSNGSATSNGTSLL) are disordered. Residues 299-310 (HHGKNGSVHHHS) show a composition bias toward basic residues. A compositionally biased stretch (polar residues) spans 311 to 322 (NGSATSNGTSLL).

It belongs to the ELO family.

It localises to the membrane. The enzyme catalyses a very-long-chain acyl-CoA + malonyl-CoA + H(+) = a very-long-chain 3-oxoacyl-CoA + CO2 + CoA. Functionally, could be implicated in synthesis of very long chain fatty acids. The polypeptide is Very long chain fatty acid elongase AAEL008004 (Aedes aegypti (Yellowfever mosquito)).